Here is a 252-residue protein sequence, read N- to C-terminus: Mitochondrial cardiolipin hydrolase (252 aa).

The Mitochondrial intermembrane portion of the chain corresponds to 1-4 (MGRL). Residues 1–39 (MGRLSWQVAAAAAVGLALTLEALPWVLRWLRSRRRRPRR) form a required for mitochondrial localization region. Residues 5–27 (SWQVAAAAAVGLALTLEALPWVL) traverse the membrane as a helical segment. At 28–252 (RWLRSRRRRP…TCGTSSESQT (225 aa)) the chain is on the cytoplasmic side. The C3H1-type; atypical zinc finger occupies 45–78 (PSQVTCTEALLRAPGAELAELPEGCPCGLPHGES). One can recognise a PLD phosphodiesterase domain in the interval 151–178 (DPGYMHHKFAIVDKRVLITGSLNWTTQA). Active-site residues include histidine 156, lysine 158, and aspartate 163.

It belongs to the phospholipase D family. MitoPLD/Zucchini subfamily. As to quaternary structure, homodimer. Interacts with MOV10L1. Interacts with MIGA1 and MIGA2; possibly facilitating homodimer formation. Interacts with GK2. Predominantly expressed in testis and ovary, but not limited to gonads (at protein level). It is also found in brain, heart, pituitary gland, prostate, pancreas, thyroid, bone marrow, lung and muscle.

It is found in the mitochondrion outer membrane. Its subcellular location is the golgi apparatus. It carries out the reaction a cardiolipin + H2O = a 1,2-diacyl-sn-glycero-3-phospho-(1'-sn-glycerol) + a 1,2-diacyl-sn-glycero-3-phosphate + H(+). Its activity is regulated as follows. MYC stimulates its phospholipase activity. MIGA1 and MIGA2 increase PLD6 self-association affinity and affects the homodimer conformation facilitating its phospholipase activity over the nuclease activity. Single stranded DNA (ssDNA) hydrolase activity does not depend upon, but is stimulated by the presence of Ca(2+) and Mn(2+). Functionally, presents phospholipase and nuclease activities, depending on the different physiological conditions. Interaction with Mitoguardin (MIGA1 or MIGA2) affects the dimer conformation, facilitating the lipase activity over the nuclease activity. Plays a key role in mitochondrial fusion and fission via its phospholipase activity. In its phospholipase role, it uses the mitochondrial lipid cardiolipin as substrate to generate phosphatidate (PA or 1,2-diacyl-sn-glycero-3-phosphate), a second messenger signaling lipid. Production of PA facilitates Mitofusin-mediated fusion, whereas the cleavage of PA by the Lipin family of phosphatases produces diacylgycerol (DAG) which promotes mitochondrial fission. Both Lipin and DAG regulate mitochondrial dynamics and membrane fusion/fission, important processes for adapting mitochondrial metabolism to changes in cell physiology. Mitochondrial fusion enables cells to cope with the increased nucleotide demand during DNA synthesis. Mitochondrial function and dynamics are closely associated with biological processes such as cell growth, proliferation, and differentiation. Mediator of MYC activity, promotes mitochondrial fusion and activates AMPK which in turn inhibits YAP/TAZ, thereby inducing cell growth and proliferation. The endonuclease activity plays a critical role in PIWI-interacting RNA (piRNA) biogenesis during spermatogenesis. Implicated in spermatogenesis and sperm fertility in testicular germ cells, its single strand-specific nuclease activity is critical for the biogenesis/maturation of PIWI-interacting RNA (piRNA). MOV10L1 selectively binds to piRNA precursors and funnels them to the endonuclease that catalyzes the first cleavage step of piRNA processing to generate piRNA intermediate fragments that are subsequently loaded to Piwi proteins. Cleaves either DNA or RNA substrates with similar affinity, producing a 5' phosphate end, in this way it participates in the processing of primary piRNA transcripts. piRNAs provide essential protection against the activity of mobile genetic elements. piRNA-mediated transposon silencing is thus critical for maintaining genome stability, in particular in germline cells when transposons are mobilized as a consequence of wide-spread genomic demethylation. PA may act as signaling molecule in the recognition/transport of the precursor RNAs of primary piRNAs. Interacts with tesmin in testes, suggesting a role in spermatogenesis via association with its interacting partner. In Homo sapiens (Human), this protein is Mitochondrial cardiolipin hydrolase (PLD6).